Reading from the N-terminus, the 127-residue chain is Fluoride-specific ion channel FluC (127 aa).

4 helical membrane passes run 4–24 (LDYLTIAFGGAIGAVLRYLVS), 39–59 (GTIIVNSVGSFFLSFLMFAAI), 68–88 (AILFFGTGLLGAFTTFSTFTY), and 102–122 (VAYALVNLLFAFTCAYFGMIL). Glycine 78 and threonine 81 together coordinate Na(+).

This sequence belongs to the fluoride channel Fluc/FEX (TC 1.A.43) family.

The protein localises to the cell inner membrane. It carries out the reaction fluoride(in) = fluoride(out). Na(+) is not transported, but it plays an essential structural role and its presence is essential for fluoride channel function. Its function is as follows. Fluoride-specific ion channel. Important for reducing fluoride concentration in the cell, thus reducing its toxicity. In Thermotoga petrophila (strain ATCC BAA-488 / DSM 13995 / JCM 10881 / RKU-1), this protein is Fluoride-specific ion channel FluC.